The primary structure comprises 595 residues: Tectonic-3 (595 aa).

Positions 1-22 (MCTLQLHLLLLVVLMLSETARP) are cleaved as a signal peptide. The disordered stretch occupies residues 23–62 (QPSSTARAFPTSWGLEPVTPEVPTSAPPDSSESPTPWTLS). Topologically, residues 23–575 (QPSSTARAFP…ALSRGASVQK (553 aa)) are extracellular. The span at 49–62 (PPDSSESPTPWTLS) shows a compositional bias: polar residues. N-linked (GlcNAc...) asparagine glycans are attached at residues N167 and N336. The helical transmembrane segment at 576 to 594 (DSLVLILCVLLLGLLNSQT) threads the bilayer. A topological domain (cytoplasmic) is located at residue K595.

It belongs to the tectonic family. Part of the tectonic-like complex (also named B9 complex).

It is found in the membrane. In terms of biological role, part of the tectonic-like complex which is required for tissue-specific ciliogenesis and may regulate ciliary membrane composition. May be involved in apoptosis regulation. Necessary for signal transduction through the sonic hedgehog (Shh) signaling pathway. The polypeptide is Tectonic-3 (Tctn3) (Mus musculus (Mouse)).